Reading from the N-terminus, the 156-residue chain is Transcription elongation factor GreA (156 aa).

Positions 46–66 form a coiled coil; it reads AEYHAAREKQSFVEGRIKELE.

It belongs to the GreA/GreB family.

In terms of biological role, necessary for efficient RNA polymerase transcription elongation past template-encoded arresting sites. The arresting sites in DNA have the property of trapping a certain fraction of elongating RNA polymerases that pass through, resulting in locked ternary complexes. Cleavage of the nascent transcript by cleavage factors such as GreA or GreB allows the resumption of elongation from the new 3'terminus. GreA releases sequences of 2 to 3 nucleotides. This is Transcription elongation factor GreA from Paracoccus denitrificans (strain Pd 1222).